The primary structure comprises 337 residues: Inositol 2-dehydrogenase (337 aa).

The protein belongs to the Gfo/Idh/MocA family. In terms of assembly, homotetramer.

It carries out the reaction myo-inositol + NAD(+) = scyllo-inosose + NADH + H(+). Functionally, involved in the oxidation of myo-inositol (MI) to 2-keto-myo-inositol (2KMI or 2-inosose). This Serratia proteamaculans (strain 568) protein is Inositol 2-dehydrogenase.